The following is a 139-amino-acid chain: Endocuticle structural glycoprotein SgAbd-8 (139 aa).

The residue at position 1 (Q1) is a Pyrrolidone carboxylic acid. T14 carries an O-linked (HexNAc...) threonine glycan. O-linked (HexNAc...) serine glycosylation is present at S15. The 71-residue stretch at D29–P99 folds into the Chitin-binding type R&amp;R domain. T97 carries O-linked (HexNAc...) threonine glycosylation. The segment at F111–F139 is disordered. The span at R129–F139 shows a compositional bias: pro residues.

Its function is as follows. Component of the abdominal endocuticle. This Schistocerca gregaria (Desert locust) protein is Endocuticle structural glycoprotein SgAbd-8.